Here is a 284-residue protein sequence, read N- to C-terminus: ATP phosphoribosyltransferase (284 aa).

Belongs to the ATP phosphoribosyltransferase family. Long subfamily. As to quaternary structure, equilibrium between an active dimeric form, an inactive hexameric form and higher aggregates. Interconversion between the various forms is largely reversible and is influenced by the natural substrates and inhibitors of the enzyme. Requires Mg(2+) as cofactor.

The protein localises to the cytoplasm. It catalyses the reaction 1-(5-phospho-beta-D-ribosyl)-ATP + diphosphate = 5-phospho-alpha-D-ribose 1-diphosphate + ATP. It participates in amino-acid biosynthesis; L-histidine biosynthesis; L-histidine from 5-phospho-alpha-D-ribose 1-diphosphate: step 1/9. Its activity is regulated as follows. Feedback inhibited by histidine. Its function is as follows. Catalyzes the condensation of ATP and 5-phosphoribose 1-diphosphate to form N'-(5'-phosphoribosyl)-ATP (PR-ATP). Has a crucial role in the pathway because the rate of histidine biosynthesis seems to be controlled primarily by regulation of HisG enzymatic activity. The chain is ATP phosphoribosyltransferase from Mycobacterium avium (strain 104).